A 721-amino-acid polypeptide reads, in one-letter code: Nitrogen permease regulator 3 (721 aa).

An N-terminal signal peptide occupies residues 1 to 21; that stretch reads MSYNLPNPSLIGILLIISTHS. Disordered regions lie at residues 27–54 and 555–614; these read YKQP…ETES and DLEN…NINA. The segment covering 37 to 54 has biased composition (acidic residues); the sequence is PDEDEGEYDQEDIAETES.

This sequence belongs to the NPR3 family.

Its function is as follows. Mediates inactivation of the TORC1 complex in response to amino acid starvation. Required for meiotic nuclear division. This chain is Nitrogen permease regulator 3 (NPR3), found in Scheffersomyces stipitis (strain ATCC 58785 / CBS 6054 / NBRC 10063 / NRRL Y-11545) (Yeast).